A 508-amino-acid chain; its full sequence is Steroid 17-alpha-hydroxylase/17,20 lyase (508 aa).

A substrate-binding site is contributed by asparagine 202. Heme is bound at residue cysteine 442.

Belongs to the cytochrome P450 family. Heme serves as cofactor.

The protein resides in the endoplasmic reticulum membrane. The protein localises to the microsome membrane. The enzyme catalyses a C21-steroid + reduced [NADPH--hemoprotein reductase] + O2 = a 17alpha-hydroxy-C21-steroid + oxidized [NADPH--hemoprotein reductase] + H2O + H(+). The catalysed reaction is progesterone + reduced [NADPH--hemoprotein reductase] + O2 = 17alpha-hydroxyprogesterone + oxidized [NADPH--hemoprotein reductase] + H2O + H(+). It carries out the reaction pregnenolone + reduced [NADPH--hemoprotein reductase] + O2 = 17alpha-hydroxypregnenolone + oxidized [NADPH--hemoprotein reductase] + H2O + H(+). It catalyses the reaction 17alpha-hydroxypregnenolone + reduced [NADPH--hemoprotein reductase] + O2 = 3beta-hydroxyandrost-5-en-17-one + acetate + oxidized [NADPH--hemoprotein reductase] + H2O + 2 H(+). Its pathway is steroid hormone biosynthesis. The protein operates within steroid biosynthesis; glucocorticoid biosynthesis. Regulated predominantly by intracellular cAMP levels. The 17,20-lyase activity is stimulated by cytochrome b5, which acts as an allosteric effector increasing the Vmax of the lyase activity. Functionally, a cytochrome P450 monooxygenase involved in corticoid and androgen biosynthesis. Catalyzes 17-alpha hydroxylation of C21 steroids, which is common for both pathways. A second oxidative step, required only for androgen synthesis, involves an acyl-carbon cleavage. Hydroxylates pregnenolone to form 17-alpha pregnenolone, followed by the cleavage of the C17-C20 bond to form dehydroepiandrosterone (DHEA). Has 17-alpha hydroxylase activity toward progesterone. The 17-alpha hydroxy intermediates, as part of adrenal glucocorticoids biosynthesis pathway, are precursors of cortisol. Mechanistically, uses molecular oxygen inserting one oxygen atom into a substrate, and reducing the second into a water molecule, with two electrons provided by NADPH via cytochrome P450 reductase (CPR; NADPH-ferrihemoprotein reductase). This chain is Steroid 17-alpha-hydroxylase/17,20 lyase (CYP17A1), found in Papio hamadryas ursinus (Chacma baboon).